The following is an 877-amino-acid chain: Alpha-glucosidase (877 aa).

Positions 1–23 are cleaved as a signal peptide; sequence MATVGVLLLCLCLCLFAPRLCSS. The disordered stretch occupies residues 89–115; that stretch reads VPQDIIPRPAPGDVLHDAPPASSAPLQ. N-linked (GlcNAc...) asparagine glycosylation is found at asparagine 191, asparagine 298, asparagine 338, and asparagine 391. Active-site residues include aspartate 437 and glutamate 440. The N-linked (GlcNAc...) asparagine glycan is linked to asparagine 471. Residue aspartate 534 is the Proton donor of the active site. N-linked (GlcNAc...) asparagine glycosylation is present at asparagine 570.

This sequence belongs to the glycosyl hydrolase 31 family. In terms of tissue distribution, high levels seen in the aleurone and scutellum after germination, while low levels are found in developing seeds.

It carries out the reaction Hydrolysis of terminal, non-reducing (1-&gt;4)-linked alpha-D-glucose residues with release of alpha-D-glucose.. The sequence is that of Alpha-glucosidase from Hordeum vulgare (Barley).